The following is a 123-amino-acid chain: Ig heavy chain V region HPCG14 (123 aa).

The Ig-like domain maps to 1–114; it reads EVKLVESGGG…GYDYWFDVWG (114 aa).

The protein is Ig heavy chain V region HPCG14 of Mus musculus (Mouse).